A 28-amino-acid polypeptide reads, in one-letter code: DDCTTYCYGVHCCPPAFKCAASGCVRNN.

3 cysteine pairs are disulfide-bonded: Cys3–Cys13, Cys7–Cys19, and Cys12–Cys24.

In terms of tissue distribution, expressed by the venom duct.

The protein localises to the secreted. The chain is Conotoxin Cl6a from Californiconus californicus (California cone).